The sequence spans 1006 residues: Transmembrane channel-like protein 5 (1006 aa).

The interval 1-289 (MSAYYRNNWS…DDPVGSLWGE (289 aa)) is disordered. Residues 1 to 458 (MSAYYRNNWS…YFNFLRWLLK (458 aa)) are Extracellular-facing. Composition is skewed to polar residues over residues 20-30 (SGSQNRTQGYL), 50-59 (TRSNPYSVAS), and 76-101 (RSLS…SPDH). Residues 138–149 (AGSSSSGNYAGS) show a composition bias toward low complexity. Positions 239-250 (REPDYSDAENGH) are enriched in basic and acidic residues. The helical transmembrane segment at 459–479 (FNIFSFILNFSFIIIPQFTVA) threads the bilayer. Over 480–485 (KKNTLQ) the chain is Cytoplasmic. The chain crosses the membrane as a helical span at residues 486–508 (FTGLEFFTGVGYFRDTVMYYGFY). At 509 to 525 (TNSTIQHGNSGASYNMQ) the chain is on the extracellular side. Residues 526 to 546 (LAYIFTIGACLTTCFFSLLFS) traverse the membrane as a helical segment. Over 547 to 619 (MAKYFRNNFI…NQLLTRFSAY (73 aa)) the chain is Cytoplasmic. Residues 620–640 (MVAWVVSTGVAIACCAAVYYL) traverse the membrane as a helical segment. The Extracellular portion of the chain corresponds to 641–654 (AEYNLEFLKTHSNP). The chain crosses the membrane as a helical span at residues 655–675 (GAVLLLPFVVSCINLAVPCIY). Residues 676–698 (SMFRLVERYEMPRHEVYVLLIRN) are Cytoplasmic-facing. Residues 699-719 (IFLKISIIGILCYYWLNTVAL) form a helical membrane-spanning segment. At 720–732 (SGEECWETLIGQD) the chain is on the extracellular side. The helical transmembrane segment at 733-753 (IYRLLLMDFVFSLVNSFLGEF) threads the bilayer. Over 754–786 (LRRIIGMQLITSLGLQEFDIARNVLELIYAQTL) the chain is Cytoplasmic. Residues 787–807 (VWIGIFFCPLLPFIQMIMLFI) traverse the membrane as a helical segment. The Extracellular portion of the chain corresponds to 808–835 (MFYSKNISLMMNFQPPSKAWRASQMMTF). Residues 836–856 (FIFLLFFPSFTGVLCTLAITI) form a helical membrane-spanning segment. The Cytoplasmic segment spans residues 857-900 (WRLKPSADCGPFRGLPLFIHSIYSWIDTLSTRPGYLWVVWIYRN). Residues 901 to 921 (LIGSVHFFFILTLIVLIITYL) form a helical membrane-spanning segment. Over 922–1006 (YWQITEGRKI…RSVQEGNPRA (85 aa)) the chain is Extracellular.

The protein belongs to the TMC family.

The protein resides in the membrane. In terms of biological role, probable component of an ion channel. Molecular function hasn't been characterized yet. The polypeptide is Transmembrane channel-like protein 5 (Homo sapiens (Human)).